The primary structure comprises 266 residues: Exosome complex component Rrp42 (266 aa).

The protein belongs to the RNase PH family. Rrp42 subfamily. As to quaternary structure, component of the archaeal exosome complex. Forms a hexameric ring-like arrangement composed of 3 Rrp41-Rrp42 heterodimers. The hexameric ring associates with a trimer of Rrp4 and/or Csl4 subunits.

It localises to the cytoplasm. Functionally, non-catalytic component of the exosome, which is a complex involved in RNA degradation. Contributes to the structuring of the Rrp41 active site. The protein is Exosome complex component Rrp42 of Methanosarcina mazei (strain ATCC BAA-159 / DSM 3647 / Goe1 / Go1 / JCM 11833 / OCM 88) (Methanosarcina frisia).